The following is a 380-amino-acid chain: Chaperone protein DnaJ (380 aa).

The J domain occupies 5-70; that stretch reads DYYEVLGVAK…QKRAAYDQYG (66 aa). The segment at 140–218 adopts a CR-type zinc-finger fold; the sequence is GYDTQIRVPS…CHGAGKVKET (79 aa). 8 residues coordinate Zn(2+): Cys-153, Cys-156, Cys-170, Cys-173, Cys-192, Cys-195, Cys-206, and Cys-209. CXXCXGXG motif repeat units lie at residues 153 to 160, 170 to 177, 192 to 199, and 206 to 213; these read CEVCHGSG, CPTCSGSG, CPKCHGTG, and CGHCHGAG.

Belongs to the DnaJ family. Homodimer. Zn(2+) serves as cofactor.

The protein resides in the cytoplasm. Functionally, participates actively in the response to hyperosmotic and heat shock by preventing the aggregation of stress-denatured proteins and by disaggregating proteins, also in an autonomous, DnaK-independent fashion. Unfolded proteins bind initially to DnaJ; upon interaction with the DnaJ-bound protein, DnaK hydrolyzes its bound ATP, resulting in the formation of a stable complex. GrpE releases ADP from DnaK; ATP binding to DnaK triggers the release of the substrate protein, thus completing the reaction cycle. Several rounds of ATP-dependent interactions between DnaJ, DnaK and GrpE are required for fully efficient folding. Also involved, together with DnaK and GrpE, in the DNA replication of plasmids through activation of initiation proteins. This is Chaperone protein DnaJ from Paraburkholderia xenovorans (strain LB400).